The sequence spans 566 residues: Intracellular exo-alpha-(1-&gt;5)-L-arabinofuranosidase (566 aa).

Polar residues predominate over residues 1–12 (MTTHNSQYSAET). Positions 1–39 (MTTHNSQYSAETTHPDKQESSPAPTAAGTTASNVSTTGN) are disordered. Over residues 20 to 32 (SSPAPTAAGTTAS) the composition is skewed to low complexity. The alpha-L-arabinofuranose site is built by glutamate 69, asparagine 114, and asparagine 214. The active-site Proton donor/acceptor is glutamate 215. Residues tyrosine 286, glutamate 340, and glutamine 409 each contribute to the alpha-L-arabinofuranose site. Residue glutamate 340 is the Nucleophile of the active site.

Belongs to the glycosyl hydrolase 51 family. Homohexamer; trimer of dimers.

The protein resides in the cytoplasm. It carries out the reaction Hydrolysis of terminal non-reducing alpha-L-arabinofuranoside residues in alpha-L-arabinosides.. It participates in glycan metabolism; L-arabinan degradation. Its activity is regulated as follows. Completely inhibited by Hg(2+) and Cu(2+) ions, whereas 1 mM Zn(2+) inhibited activity by 51%. Involved in the degradation of arabinan and is a key enzyme in the complete degradation of the plant cell wall. Catalyzes the cleavage of terminal alpha-(1-&gt;5)-arabinofuranosyl bonds in different hemicellulosic homopolysaccharides (branched and debranched arabinans). It is active with sugar beet arabinan and wheat arabinoxylan. It also exhibited activity against alpha-(1-&gt;5)-linked arabinobiose, arabinotriose, arabinotetraose, and arabinopentaose. In Bifidobacterium longum, this protein is Intracellular exo-alpha-(1-&gt;5)-L-arabinofuranosidase (abfB).